The chain runs to 129 residues: Small ribosomal subunit protein uS11c (129 aa).

It belongs to the universal ribosomal protein uS11 family. As to quaternary structure, part of the 30S ribosomal subunit.

The protein localises to the plastid. The protein resides in the chloroplast. The polypeptide is Small ribosomal subunit protein uS11c (Oltmannsiellopsis viridis (Marine flagellate)).